The chain runs to 423 residues: Core protease OPG082 (423 aa).

Catalysis depends on residues His-241, Asp-248, and Cys-328.

The protein belongs to the peptidase C57 family.

It is found in the virion. Late protein responsible for processing most or all of the viral core and membrane proteins known to undergo morphogenesis-associated proteolysis. These proteolytic events are involved in the transformation of immature virions (IV) into mature virions (MV). Probably cleaves at least the OPG129, OPG136, OPG098, and OPG144 precursors preferentially at Ala-Gly-|-Ala motifs. Also seems to process Ala-Gly-|-Ser and Ala-Gly-|-Thr motifs. The sequence is that of Core protease OPG082 (OPG083) from Homo sapiens (Human).